The sequence spans 360 residues: MATSQIAIIVLLGLLVATNIHITEAQIGVCYGMMGNNLPSHSEVIQLYKSRNIRRLRLYDPNHGALNALRGSNIEVILGLPNVDVKHISSGMEHARWWVQKNVRDFWPHVKIKYIAVGNEISPVTGTSNLAPFQVPALVNIYKAIGEAGLGNDIKVSTSVDMTLIGNSYPPSQGSFRNDVRWFTDPIVGFLRDTRAPLLVNIYPYFSYSGNPGQISLPYALFTAPNVVVQDGSRQYRNLFDAMLDSVYAAMDRTGGGSVGIVVSESGWPSAGAFGATHENAQTYLRNLIQHAKEGSPRKPGPIETYIFAMFDENNKNPELEKHFGMFSPNKQPKYNLNFGVSERVWDITNSTASSLTSEI.

Positions 1 to 25 (MATSQIAIIVLLGLLVATNIHITEA) are cleaved as a signal peptide. A Pyrrolidone carboxylic acid modification is found at Q26. E120 (proton donor) is an active-site residue. The active-site Nucleophile is the E265. Positions 341–360 (VSERVWDITNSTASSLTSEI) are cleaved as a propeptide — removed in mature form. N-linked (GlcNAc...) asparagine glycosylation is present at N350.

This sequence belongs to the glycosyl hydrolase 17 family.

Its subcellular location is the vacuole. The enzyme catalyses Hydrolysis of (1-&gt;3)-beta-D-glucosidic linkages in (1-&gt;3)-beta-D-glucans.. In terms of biological role, implicated in the defense of plants against pathogens. This Solanum lycopersicum (Tomato) protein is Glucan endo-1,3-beta-glucosidase B.